The chain runs to 287 residues: 33 kDa chaperonin (287 aa).

2 cysteine pairs are disulfide-bonded: C233–C235 and C266–C269.

This sequence belongs to the HSP33 family. Under oxidizing conditions two disulfide bonds are formed involving the reactive cysteines. Under reducing conditions zinc is bound to the reactive cysteines and the protein is inactive.

The protein localises to the cytoplasm. In terms of biological role, redox regulated molecular chaperone. Protects both thermally unfolding and oxidatively damaged proteins from irreversible aggregation. Plays an important role in the bacterial defense system toward oxidative stress. In Thermodesulfovibrio yellowstonii (strain ATCC 51303 / DSM 11347 / YP87), this protein is 33 kDa chaperonin.